The chain runs to 207 residues: ATP-dependent Clp protease proteolytic subunit (207 aa).

Catalysis depends on Ser-111, which acts as the Nucleophile. His-136 is an active-site residue.

Belongs to the peptidase S14 family. Fourteen ClpP subunits assemble into 2 heptameric rings which stack back to back to give a disk-like structure with a central cavity, resembling the structure of eukaryotic proteasomes.

Its subcellular location is the cytoplasm. It catalyses the reaction Hydrolysis of proteins to small peptides in the presence of ATP and magnesium. alpha-casein is the usual test substrate. In the absence of ATP, only oligopeptides shorter than five residues are hydrolyzed (such as succinyl-Leu-Tyr-|-NHMec, and Leu-Tyr-Leu-|-Tyr-Trp, in which cleavage of the -Tyr-|-Leu- and -Tyr-|-Trp bonds also occurs).. In terms of biological role, cleaves peptides in various proteins in a process that requires ATP hydrolysis. Has a chymotrypsin-like activity. Plays a major role in the degradation of misfolded proteins. This Yersinia pseudotuberculosis serotype O:1b (strain IP 31758) protein is ATP-dependent Clp protease proteolytic subunit.